The following is a 129-amino-acid chain: Small ribosomal subunit protein uS11 (129 aa).

The protein belongs to the universal ribosomal protein uS11 family. Part of the 30S ribosomal subunit. Interacts with proteins S7 and S18. Binds to IF-3.

Located on the platform of the 30S subunit, it bridges several disparate RNA helices of the 16S rRNA. Forms part of the Shine-Dalgarno cleft in the 70S ribosome. This Methylobacterium radiotolerans (strain ATCC 27329 / DSM 1819 / JCM 2831 / NBRC 15690 / NCIMB 10815 / 0-1) protein is Small ribosomal subunit protein uS11.